A 313-amino-acid chain; its full sequence is MEAGPWRVSAPPSGPPQFPAVVPGPSLEVARAHMLALGPQQLLAQDEEGDTLLHLFAARGLRWAAYAAAEVLQVYRRLDIREHKGKTPLLVAAAANQPLIVEDLLNLGAEPNAADHQGRSVLHVAATYGLPGVLLAVLNSGVQVDLEARDFEGLTPLHTAILALNVAMRPSDLCPRVLSTQARDRLDCVHMLLQMGANHTSQEIKSNKTVLHLAVQAANPTLVQLLLELPRGDLRTFVNMKAHGNTALHMAAALPPGPAQEAIVRHLLAAGADPTLRNLENEQPVHLLRPGPGPEGLRQLLKRSRVAPPGLSS.

ANK repeat units lie at residues 48-83, 84-113, 117-146, 152-201, 206-236, and 243-276; these read EGDT…IREH, KGKT…EPNA, QGRS…QVDL, EGLT…NHTS, SNKT…DLRT, and HGNT…DPTL.

Belongs to the NF-kappa-B inhibitor family. In terms of assembly, interacts with NFKB1, RELA and RELB; in the nucleus.

It is found in the nucleus. Regulates the expression of IL-2, IL-6, and other cytokines through regulation on NF-kappa-B activity. Functions in the regulation of inflammatory responses. Involved in the induction of T helper 17 cells (Th17) differentiation upon recognition of antigen by T cell antigen receptor (TCR). May also regulate TCR-induced negative selection of thymocytes. This chain is NF-kappa-B inhibitor delta (NFKBID), found in Homo sapiens (Human).